The primary structure comprises 312 residues: Olfactory receptor 10D3 (312 aa).

Residues 1-26 (MEVKNCCMVTEFILLGIPHTEGLEMT) are Extracellular-facing. A helical membrane pass occupies residues 27-47 (LFVLFLPFYACTLLGNVSILV). The Cytoplasmic segment spans residues 48 to 57 (AVMSSARLHT). The chain crosses the membrane as a helical span at residues 58-78 (PMYFFLGNLSVFDMGFSSVTC). Residues 79–97 (PKMLLYLMGLSRLISYKDC) are Extracellular-facing. A disulfide bridge links Cys97 with Cys179. Residues 98 to 118 (VCQLFFFHFLGSIECFLFTVM) traverse the membrane as a helical segment. Topologically, residues 119–139 (AYDRFTAICYPLRYTVIMNPR) are cytoplasmic. Residues 140-160 (ICVALAVGTWLLGCIHSSILT) form a helical membrane-spanning segment. The Extracellular portion of the chain corresponds to 161–197 (SLTFTLPYCGPNEVDHFFCDIPALLPLACADTSLAQR). A helical transmembrane segment spans residues 198-218 (VSFTNVGLISLVCFLLILLSY). Residues 219–239 (TRITISILSIRTTEGRRRAFS) are Cytoplasmic-facing. Residues 240-260 (TCSAHLIAILCAYGPIITVYL) form a helical membrane-spanning segment. At 261-266 (QPTPNP) the chain is on the extracellular side. A helical transmembrane segment spans residues 267 to 287 (MLGTVVQILMNLVGPMLNPLI). At 288–312 (YTLRNKEVKTALKTILHRTGHVPES) the chain is on the cytoplasmic side.

This sequence belongs to the G-protein coupled receptor 1 family.

Its subcellular location is the cell membrane. Odorant receptor. The polypeptide is Olfactory receptor 10D3 (Homo sapiens (Human)).